A 452-amino-acid polypeptide reads, in one-letter code: Translation initiation factor eIF2B subunit gamma (452 aa).

Met-1 is subject to N-acetylmethionine. Position 260 is a phosphoserine (Ser-260).

Belongs to the eIF-2B gamma/epsilon subunits family. As to quaternary structure, component of the translation initiation factor 2B (eIF2B) complex which is a heterodecamer of two sets of five different subunits: alpha, beta, gamma, delta and epsilon. Subunits alpha, beta and delta comprise a regulatory subcomplex and subunits epsilon and gamma comprise a catalytic subcomplex. Within the complex, the hexameric regulatory complex resides at the center, with the two heterodimeric catalytic subcomplexes bound on opposite sides.

Its subcellular location is the cytoplasm. The protein localises to the cytosol. Its activity is regulated as follows. Activated by the chemical integrated stress response (ISR) inhibitor ISRIB which stimulates guanine nucleotide exchange factor activity for both phosphorylated and unphosphorylated eIF2. Functionally, acts as a component of the translation initiation factor 2B (eIF2B) complex, which catalyzes the exchange of GDP for GTP on the eukaryotic initiation factor 2 (eIF2) complex gamma subunit. Its guanine nucleotide exchange factor activity is repressed when bound to eIF2 complex phosphorylated on the alpha subunit, thereby limiting the amount of methionyl-initiator methionine tRNA available to the ribosome and consequently global translation is repressed. The protein is Translation initiation factor eIF2B subunit gamma (EIF2B3) of Homo sapiens (Human).